We begin with the raw amino-acid sequence, 104 residues long: Iron-sulfur cluster assembly protein CyaY (104 aa).

It belongs to the frataxin family.

Its function is as follows. Involved in iron-sulfur (Fe-S) cluster assembly. May act as a regulator of Fe-S biogenesis. The sequence is that of Iron-sulfur cluster assembly protein CyaY from Vibrio atlanticus (strain LGP32) (Vibrio splendidus (strain Mel32)).